The following is a 355-amino-acid chain: UDP-N-acetylglucosamine--N-acetylmuramyl-(pentapeptide) pyrophosphoryl-undecaprenol N-acetylglucosamine transferase (355 aa).

UDP-N-acetyl-alpha-D-glucosamine is bound by residues 15–17 (TGG), N127, R163, S191, I244, 263–268 (ALTVSE), and Q288.

Belongs to the glycosyltransferase 28 family. MurG subfamily.

It localises to the cell inner membrane. The enzyme catalyses di-trans,octa-cis-undecaprenyl diphospho-N-acetyl-alpha-D-muramoyl-L-alanyl-D-glutamyl-meso-2,6-diaminopimeloyl-D-alanyl-D-alanine + UDP-N-acetyl-alpha-D-glucosamine = di-trans,octa-cis-undecaprenyl diphospho-[N-acetyl-alpha-D-glucosaminyl-(1-&gt;4)]-N-acetyl-alpha-D-muramoyl-L-alanyl-D-glutamyl-meso-2,6-diaminopimeloyl-D-alanyl-D-alanine + UDP + H(+). Its pathway is cell wall biogenesis; peptidoglycan biosynthesis. Its function is as follows. Cell wall formation. Catalyzes the transfer of a GlcNAc subunit on undecaprenyl-pyrophosphoryl-MurNAc-pentapeptide (lipid intermediate I) to form undecaprenyl-pyrophosphoryl-MurNAc-(pentapeptide)GlcNAc (lipid intermediate II). This is UDP-N-acetylglucosamine--N-acetylmuramyl-(pentapeptide) pyrophosphoryl-undecaprenol N-acetylglucosamine transferase from Photorhabdus laumondii subsp. laumondii (strain DSM 15139 / CIP 105565 / TT01) (Photorhabdus luminescens subsp. laumondii).